A 96-amino-acid chain; its full sequence is Putative membrane protein insertion efficiency factor (96 aa).

Low complexity predominate over residues 71-84; it reads THGTAAAPPASAAP. The interval 71–96 is disordered; the sequence is THGTAAAPPASAAPGRPPVTVRLPRP.

The protein belongs to the UPF0161 family.

Its subcellular location is the cell inner membrane. Its function is as follows. Could be involved in insertion of integral membrane proteins into the membrane. The sequence is that of Putative membrane protein insertion efficiency factor from Cupriavidus metallidurans (strain ATCC 43123 / DSM 2839 / NBRC 102507 / CH34) (Ralstonia metallidurans).